We begin with the raw amino-acid sequence, 360 residues long: Photosystem II protein D1 (360 aa).

Helical transmembrane passes span 29 to 46 (YIGW…TATS), 118 to 133 (HFLL…EWEL), and 142 to 156 (WISV…AAAA). Residue H118 participates in chlorophyll a binding. Y126 is a binding site for pheophytin a. 2 residues coordinate [CaMn4O5] cluster: D170 and E189. The chain crosses the membrane as a helical span at residues 197 to 218 (FHQLGVAGVFGGSLFSAMHGSL). Residue H198 coordinates chlorophyll a. A quinone-binding positions include H215 and 264-265 (SF). Position 215 (H215) interacts with Fe cation. Position 272 (H272) interacts with Fe cation. Residues 274-288 (FLGLWPVVGIWFTAM) form a helical membrane-spanning segment. [CaMn4O5] cluster is bound by residues H332, E333, D342, and A344. The propeptide occupies 345–360 (SSNSLPVSLVAPSVNG).

The protein belongs to the reaction center PufL/M/PsbA/D family. In terms of assembly, PSII is composed of 1 copy each of membrane proteins PsbA, PsbB, PsbC, PsbD, PsbE, PsbF, PsbH, PsbI, PsbJ, PsbK, PsbL, PsbM, PsbT, PsbX, PsbY, PsbZ, Psb30/Ycf12, at least 3 peripheral proteins of the oxygen-evolving complex and a large number of cofactors. It forms dimeric complexes. Requires The D1/D2 heterodimer binds P680, chlorophylls that are the primary electron donor of PSII, and subsequent electron acceptors. It shares a non-heme iron and each subunit binds pheophytin, quinone, additional chlorophylls, carotenoids and lipids. D1 provides most of the ligands for the Mn4-Ca-O5 cluster of the oxygen-evolving complex (OEC). There is also a Cl(-1) ion associated with D1 and D2, which is required for oxygen evolution. The PSII complex binds additional chlorophylls, carotenoids and specific lipids. as cofactor. Tyr-161 forms a radical intermediate that is referred to as redox-active TyrZ, YZ or Y-Z. Post-translationally, C-terminally processed by CTPA; processing is essential to allow assembly of the oxygen-evolving complex and thus photosynthetic growth.

The protein localises to the plastid. It localises to the chloroplast thylakoid membrane. The catalysed reaction is 2 a plastoquinone + 4 hnu + 2 H2O = 2 a plastoquinol + O2. Its function is as follows. Photosystem II (PSII) is a light-driven water:plastoquinone oxidoreductase that uses light energy to abstract electrons from H(2)O, generating O(2) and a proton gradient subsequently used for ATP formation. It consists of a core antenna complex that captures photons, and an electron transfer chain that converts photonic excitation into a charge separation. The D1/D2 (PsbA/PsbD) reaction center heterodimer binds P680, the primary electron donor of PSII as well as several subsequent electron acceptors. This chain is Photosystem II protein D1, found in Gracilaria tenuistipitata var. liui (Red alga).